Reading from the N-terminus, the 46-residue chain is Esculentin-1R (46 aa).

An intrachain disulfide couples Cys40 to Cys46.

In terms of tissue distribution, expressed by the skin glands.

It localises to the secreted. Functionally, shows antibacterial activity against representative Gram-negative and Gram-positive bacterial species, and hemolytic activity. The protein is Esculentin-1R of Pelophylax ridibundus (Marsh frog).